The chain runs to 426 residues: Crinkler effector protein 4 (426 aa).

An LQLFLAK domain region spans residues 20–57; sequence VEIDDSAKVSKLKKVIKEENPATITCDAKDLQLFLAKK. The interval 59-107 is DWL domain; sequence DAWLDGAGAAAVELDEHGHPQGCVQMDPTLWVKNPKHFGDNFQPGEGQV. Residues 108–114 carry the HVLVXXP motif motif; the sequence is HVLVVVP. Residues 115–426 form an effector domain region; it reads EGVVGSASET…RSIPTLSYFS (312 aa).

The protein belongs to the Crinkler effector family.

The protein resides in the secreted. The protein localises to the host nucleus. In terms of biological role, secreted effector that is critical to pathogenesis by suppressing plant immune responsess. Promotes Phytophthora infection by suppressing the H(2)O(2) accumulation and callose deposition. May induce cell death by regulating expression of cell death-related genes. In Phytophthora capsici, this protein is Crinkler effector protein 4.